Here is a 164-residue protein sequence, read N- to C-terminus: Interferon gamma (164 aa).

The first 19 residues, 1 to 19 (MTCQTYNLFVLSVIMIYYG), serve as a signal peptide directing secretion. Residues N42 and N61 are each glycosylated (N-linked (GlcNAc...) asparagine).

Belongs to the type II (or gamma) interferon family. As to quaternary structure, homodimer.

It localises to the secreted. Its function is as follows. Produced by lymphocytes activated by specific antigens or mitogens. IFN-gamma, in addition to having antiviral activity, has important immunoregulatory functions. It is a potent activator of macrophages, it has antiproliferative effects on transformed cells and it can potentiate the antiviral and antitumor effects of the type I interferons. This chain is Interferon gamma (IFNG), found in Numida meleagris (Helmeted guineafowl).